Reading from the N-terminus, the 704-residue chain is Methionine--tRNA ligase (704 aa).

Residues 17 to 27 carry the 'HIGH' region motif; it reads PYANGPIHLGH. Residues Cys148, Cys151, Cys161, and Cys164 each coordinate Zn(2+). The short motif at 348-352 is the 'KMSKS' region element; it reads KMSKS. Residue Lys351 participates in ATP binding. Residues 603–704 enclose the tRNA-binding domain; the sequence is ELSKVELRVG…KDAKPGDRLK (102 aa).

Belongs to the class-I aminoacyl-tRNA synthetase family. MetG type 1 subfamily. In terms of assembly, homodimer. Zn(2+) serves as cofactor.

Its subcellular location is the cytoplasm. It catalyses the reaction tRNA(Met) + L-methionine + ATP = L-methionyl-tRNA(Met) + AMP + diphosphate. Functionally, is required not only for elongation of protein synthesis but also for the initiation of all mRNA translation through initiator tRNA(fMet) aminoacylation. This chain is Methionine--tRNA ligase, found in Leptospira borgpetersenii serovar Hardjo-bovis (strain L550).